Reading from the N-terminus, the 149-residue chain is Probable flagellum biosynthesis repressor protein FlbT (149 aa).

It belongs to the FlbT family.

In terms of biological role, has a post-transcriptional repressor function in flagellum biogenesis. Associates with the 5'-UTR of fljK mRNA and promotes its degradation. In Rhizobium etli (strain CIAT 652), this protein is Probable flagellum biosynthesis repressor protein FlbT.